A 160-amino-acid polypeptide reads, in one-letter code: Lipoprotein signal peptidase (160 aa).

Transmembrane regions (helical) follow at residues 5 to 25, 60 to 80, and 84 to 104; these read LVFF…KFII, IEWL…AFFI, and LPFL…AGTV. Residues Asp118 and Asp132 contribute to the active site. The helical transmembrane segment at 128-148 threads the bilayer; sequence FNIADSCLTVGVIGLLLLYIV.

The protein belongs to the peptidase A8 family.

It is found in the cell membrane. The catalysed reaction is Release of signal peptides from bacterial membrane prolipoproteins. Hydrolyzes -Xaa-Yaa-Zaa-|-(S,diacylglyceryl)Cys-, in which Xaa is hydrophobic (preferably Leu), and Yaa (Ala or Ser) and Zaa (Gly or Ala) have small, neutral side chains.. It functions in the pathway protein modification; lipoprotein biosynthesis (signal peptide cleavage). Its function is as follows. This protein specifically catalyzes the removal of signal peptides from prolipoproteins. The chain is Lipoprotein signal peptidase from Dehalococcoides mccartyi (strain ATCC BAA-2100 / JCM 16839 / KCTC 5957 / BAV1).